The sequence spans 243 residues: DNA repair protein RecO (243 aa).

It belongs to the RecO family.

Functionally, involved in DNA repair and RecF pathway recombination. The chain is DNA repair protein RecO from Chlamydia trachomatis serovar L2 (strain ATCC VR-902B / DSM 19102 / 434/Bu).